Reading from the N-terminus, the 521-residue chain is Apolipoprotein N-acyltransferase (521 aa).

Helical transmembrane passes span 27-47, 64-84, 93-113, 125-145, 167-187, and 202-222; these read VLLA…IAFA, LGFV…TIVV, IVSV…PAVV, ISLL…RAFL, IADI…NVVL, and YPVK…AYGF. The CN hydrolase domain maps to 239-483; sequence IQGNIDQNIK…EAVLNGEVRL (245 aa). Glu-281 acts as the Proton acceptor in catalysis. Lys-344 is an active-site residue. Cys-394 serves as the catalytic Nucleophile. A helical transmembrane segment spans residues 493–513; that stretch reads YGDVFAWACVAGAAVVAALAF.

The protein belongs to the CN hydrolase family. Apolipoprotein N-acyltransferase subfamily.

Its subcellular location is the cell inner membrane. The catalysed reaction is N-terminal S-1,2-diacyl-sn-glyceryl-L-cysteinyl-[lipoprotein] + a glycerophospholipid = N-acyl-S-1,2-diacyl-sn-glyceryl-L-cysteinyl-[lipoprotein] + a 2-acyl-sn-glycero-3-phospholipid + H(+). Its pathway is protein modification; lipoprotein biosynthesis (N-acyl transfer). Its function is as follows. Catalyzes the phospholipid dependent N-acylation of the N-terminal cysteine of apolipoprotein, the last step in lipoprotein maturation. This Geobacter metallireducens (strain ATCC 53774 / DSM 7210 / GS-15) protein is Apolipoprotein N-acyltransferase.